Reading from the N-terminus, the 308-residue chain is Ribonuclease H2 subunit B (308 aa).

Residue Ala2 is modified to N-acetylalanine. An N6-acetyllysine modification is found at Lys292. Ser293 carries the post-translational modification Phosphoserine.

Belongs to the RNase H2 subunit B family. The RNase H2 complex is a heterotrimer composed of the catalytic subunit RNASEH2A and the non-catalytic subunits RNASEH2B and RNASEH2C.

The protein localises to the nucleus. Functionally, non catalytic subunit of RNase H2, an endonuclease that specifically degrades the RNA of RNA:DNA hybrids. Participates in DNA replication, possibly by mediating the removal of lagging-strand Okazaki fragment RNA primers during DNA replication. Mediates the excision of single ribonucleotides from DNA:RNA duplexes. The chain is Ribonuclease H2 subunit B (Rnaseh2b) from Mus musculus (Mouse).